We begin with the raw amino-acid sequence, 653 residues long: Rab proteins geranylgeranyltransferase component A 1 (653 aa).

The interval 606–653 is disordered; it reads PPPPNPEDIILDGDSLQPEASESSAIPEANSETFKESTNLGNLEESSE. Residues 623 to 646 show a composition bias toward polar residues; the sequence is PEASESSAIPEANSETFKESTNLG.

Belongs to the Rab GDI family. Monomer. Heterotrimer composed of RABGGTA, RABGGTB and CHM; within this trimer, RABGGTA and RABGGTB form the catalytic component B, while CHM (component A) mediates Rab protein binding. Can associate with the Rab GGTase dimer (RGGT or component B) prior to Rab protein binding; the association is stabilized by geranylgeranyl pyrophosphate (GGpp). The CHM:RGGT:Rab complex is destabilized by GGpp. Interacts with RAB1A, RAB1B, RAB5A, RAB7A and RAB27A and mediates their prenylation. Interacts with the non-phosphorylated forms of RAB3A, RAB3B, RAB3C, RAB3D, RAB5B, RAB5C, RAB8A, RAB8B, RAB10, RAB12, RAB35, and RAB43.

It localises to the cytoplasm. The protein localises to the cytosol. In terms of biological role, substrate-binding subunit of the Rab geranylgeranyltransferase (GGTase) complex. Binds unprenylated Rab proteins and presents the substrate peptide to the catalytic component B composed of RABGGTA and RABGGTB, and remains bound to it after the geranylgeranyl transfer reaction. The component A is thought to be regenerated by transferring its prenylated Rab back to the donor membrane. Besides, a pre-formed complex consisting of CHM and the Rab GGTase dimer (RGGT or component B) can bind to and prenylate Rab proteins; this alternative pathway is proposed to be the predominant pathway for Rab protein geranylgeranylation. This is Rab proteins geranylgeranyltransferase component A 1 (CHM) from Homo sapiens (Human).